The primary structure comprises 158 residues: Placenta growth factor (158 aa).

The or 26 signal peptide spans 1–23 (MLAMKLFTCFLQVLAGLAVHSQG). 2 N-linked (GlcNAc...) asparagine glycosylation sites follow: N29 and N30. 3 disulfides stabilise this stretch: C48-C90, C79-C125, and C83-C127. N97 carries N-linked (GlcNAc...) asparagine glycosylation. The segment at 136–158 (AERRKTKGKRKQSKTPQTEEPHL) is disordered. A compositionally biased stretch (basic residues) spans 137 to 148 (ERRKTKGKRKQS).

It belongs to the PDGF/VEGF growth factor family. Antiparallel homodimer; disulfide-linked. Also found as heterodimer with VEGFA/VEGF.

It is found in the secreted. Its function is as follows. Growth factor active in angiogenesis and endothelial cell growth, stimulating their proliferation and migration. It binds to the receptor FLT1/VEGFR-1. Also promotes cell tumor growth. The sequence is that of Placenta growth factor (Pgf) from Rattus norvegicus (Rat).